The following is a 173-amino-acid chain: Probable WRKY transcription factor 50 (173 aa).

Residues 107 to 172 (SEVEVLDDGF…YEGSHNHSSM (66 aa)) constitute a DNA-binding region (WRKY).

Belongs to the WRKY group II-c family.

It localises to the nucleus. Transcription factor. Interacts specifically with the W box (5'-(T)TGAC[CT]-3'), a frequently occurring elicitor-responsive cis-acting element. This chain is Probable WRKY transcription factor 50 (WRKY50), found in Arabidopsis thaliana (Mouse-ear cress).